Here is a 390-residue protein sequence, read N- to C-terminus: Phosphopentomutase (390 aa).

Mn(2+)-binding residues include Asp14, Asp286, His291, Asp327, His328, and His339.

The protein belongs to the phosphopentomutase family. Mn(2+) is required as a cofactor.

It localises to the cytoplasm. It carries out the reaction 2-deoxy-alpha-D-ribose 1-phosphate = 2-deoxy-D-ribose 5-phosphate. The catalysed reaction is alpha-D-ribose 1-phosphate = D-ribose 5-phosphate. It functions in the pathway carbohydrate degradation; 2-deoxy-D-ribose 1-phosphate degradation; D-glyceraldehyde 3-phosphate and acetaldehyde from 2-deoxy-alpha-D-ribose 1-phosphate: step 1/2. Isomerase that catalyzes the conversion of deoxy-ribose 1-phosphate (dRib-1-P) and ribose 1-phosphate (Rib-1-P) to deoxy-ribose 5-phosphate (dRib-5-P) and ribose 5-phosphate (Rib-5-P), respectively. This chain is Phosphopentomutase, found in Exiguobacterium sibiricum (strain DSM 17290 / CCUG 55495 / CIP 109462 / JCM 13490 / 255-15).